Consider the following 93-residue polypeptide: Putative defensin-like protein 282 (93 aa).

Positions 1–25 (MANATSFIALAYLLASALMTTVVLG) are cleaved as a signal peptide. 3 disulfide bridges follow: Cys51–Cys83, Cys66–Cys90, and Cys72–Cys92.

This sequence belongs to the DEFL family.

The protein localises to the secreted. This is Putative defensin-like protein 282 from Arabidopsis thaliana (Mouse-ear cress).